The sequence spans 461 residues: Adenine DNA glycosylase (461 aa).

Glutamate 69 functions as the Proton donor/acceptor in the catalytic mechanism. Positions 226, 233, 236, and 242 each coordinate [4Fe-4S] cluster. The Nudix hydrolase domain maps to 296-437 (QREERALVVI…RAALEIKKRK (142 aa)). A Nudix box motif is present at residues 340–366 (FGQESWPKDMDAEFQKSIAQWISNDSR).

Belongs to the Nth/MutY family. Monomer. Requires [4Fe-4S] cluster as cofactor.

The catalysed reaction is Hydrolyzes free adenine bases from 7,8-dihydro-8-oxoguanine:adenine mismatched double-stranded DNA, leaving an apurinic site.. Its function is as follows. Adenine glycosylase active on G-A mispairs. Has glycosylase and nicking activities and is active at A/G and A/GO sites. This chain is Adenine DNA glycosylase (myh1), found in Schizosaccharomyces pombe (strain 972 / ATCC 24843) (Fission yeast).